The following is a 215-amino-acid chain: Uracil phosphoribosyltransferase (215 aa).

Residues R77, R102, and 129–137 contribute to the 5-phospho-alpha-D-ribose 1-diphosphate site; that span reads DPMLATGGS. Uracil-binding positions include I193 and 198-200; that span reads GDA. D199 lines the 5-phospho-alpha-D-ribose 1-diphosphate pocket.

The protein belongs to the UPRTase family. It depends on Mg(2+) as a cofactor.

The enzyme catalyses UMP + diphosphate = 5-phospho-alpha-D-ribose 1-diphosphate + uracil. Its pathway is pyrimidine metabolism; UMP biosynthesis via salvage pathway; UMP from uracil: step 1/1. Allosterically activated by GTP. In terms of biological role, catalyzes the conversion of uracil and 5-phospho-alpha-D-ribose 1-diphosphate (PRPP) to UMP and diphosphate. This Corynebacterium urealyticum (strain ATCC 43042 / DSM 7109) protein is Uracil phosphoribosyltransferase.